The chain runs to 220 residues: Probable septum site-determining protein MinC (220 aa).

This sequence belongs to the MinC family. Interacts with MinD and FtsZ.

Functionally, cell division inhibitor that blocks the formation of polar Z ring septums. Rapidly oscillates between the poles of the cell to destabilize FtsZ filaments that have formed before they mature into polar Z rings. Prevents FtsZ polymerization. The chain is Probable septum site-determining protein MinC from Vibrio vulnificus (strain CMCP6).